The chain runs to 350 residues: Ketol-acid reductoisomerase (NADP(+)) (350 aa).

In terms of domain architecture, KARI N-terminal Rossmann spans 4 to 187 (VSITTDYSRM…GGARANIIKT (184 aa)). NADP(+)-binding positions include 30–33 (YGSQ), Arg53, Thr58, and 88–91 (DMVQ). The active site involves His113. Gly139 contributes to the NADP(+) binding site. The KARI C-terminal knotted domain occupies 188–333 (TFKEETETDL…KQLRAKMVWL (146 aa)). Residues Asp196, Glu200, Glu232, and Glu236 each coordinate Mg(2+). Ser257 contributes to the substrate binding site.

Belongs to the ketol-acid reductoisomerase family. Mg(2+) serves as cofactor.

It carries out the reaction (2R)-2,3-dihydroxy-3-methylbutanoate + NADP(+) = (2S)-2-acetolactate + NADPH + H(+). It catalyses the reaction (2R,3R)-2,3-dihydroxy-3-methylpentanoate + NADP(+) = (S)-2-ethyl-2-hydroxy-3-oxobutanoate + NADPH + H(+). Its pathway is amino-acid biosynthesis; L-isoleucine biosynthesis; L-isoleucine from 2-oxobutanoate: step 2/4. The protein operates within amino-acid biosynthesis; L-valine biosynthesis; L-valine from pyruvate: step 2/4. Its function is as follows. Involved in the biosynthesis of branched-chain amino acids (BCAA). Catalyzes an alkyl-migration followed by a ketol-acid reduction of (S)-2-acetolactate (S2AL) to yield (R)-2,3-dihydroxy-isovalerate. In the isomerase reaction, S2AL is rearranged via a Mg-dependent methyl migration to produce 3-hydroxy-3-methyl-2-ketobutyrate (HMKB). In the reductase reaction, this 2-ketoacid undergoes a metal-dependent reduction by NADPH to yield (R)-2,3-dihydroxy-isovalerate. In Xylella fastidiosa (strain 9a5c), this protein is Ketol-acid reductoisomerase (NADP(+)).